Here is a 614-residue protein sequence, read N- to C-terminus: Dihydroxy-acid dehydratase 1 (614 aa).

Position 81 (Asp81) interacts with Mg(2+). A [2Fe-2S] cluster-binding site is contributed by Cys122. Mg(2+) is bound by residues Asp123 and Lys124. N6-carboxylysine is present on Lys124. [2Fe-2S] cluster is bound at residue Cys195. Mg(2+) is bound at residue Glu491. Residue Ser517 is the Proton acceptor of the active site.

It belongs to the IlvD/Edd family. As to quaternary structure, homodimer. The cofactor is [2Fe-2S] cluster. Requires Mg(2+) as cofactor.

It carries out the reaction (2R)-2,3-dihydroxy-3-methylbutanoate = 3-methyl-2-oxobutanoate + H2O. The catalysed reaction is (2R,3R)-2,3-dihydroxy-3-methylpentanoate = (S)-3-methyl-2-oxopentanoate + H2O. It functions in the pathway amino-acid biosynthesis; L-isoleucine biosynthesis; L-isoleucine from 2-oxobutanoate: step 3/4. Its pathway is amino-acid biosynthesis; L-valine biosynthesis; L-valine from pyruvate: step 3/4. Its function is as follows. Functions in the biosynthesis of branched-chain amino acids. Catalyzes the dehydration of (2R,3R)-2,3-dihydroxy-3-methylpentanoate (2,3-dihydroxy-3-methylvalerate) into 2-oxo-3-methylpentanoate (2-oxo-3-methylvalerate) and of (2R)-2,3-dihydroxy-3-methylbutanoate (2,3-dihydroxyisovalerate) into 2-oxo-3-methylbutanoate (2-oxoisovalerate), the penultimate precursor to L-isoleucine and L-valine, respectively. The polypeptide is Dihydroxy-acid dehydratase 1 (Mesorhizobium japonicum (strain LMG 29417 / CECT 9101 / MAFF 303099) (Mesorhizobium loti (strain MAFF 303099))).